The primary structure comprises 431 residues: Histidinol dehydrogenase (431 aa).

Residues tyrosine 127, glutamine 185, and asparagine 208 each coordinate NAD(+). 3 residues coordinate substrate: serine 234, glutamine 256, and histidine 259. Residues glutamine 256 and histidine 259 each contribute to the Zn(2+) site. Catalysis depends on proton acceptor residues glutamate 323 and histidine 324. Substrate is bound by residues histidine 324, aspartate 357, glutamate 411, and histidine 416. Position 357 (aspartate 357) interacts with Zn(2+). Position 416 (histidine 416) interacts with Zn(2+).

This sequence belongs to the histidinol dehydrogenase family. Requires Zn(2+) as cofactor.

It carries out the reaction L-histidinol + 2 NAD(+) + H2O = L-histidine + 2 NADH + 3 H(+). It participates in amino-acid biosynthesis; L-histidine biosynthesis; L-histidine from 5-phospho-alpha-D-ribose 1-diphosphate: step 9/9. In terms of biological role, catalyzes the sequential NAD-dependent oxidations of L-histidinol to L-histidinaldehyde and then to L-histidine. The protein is Histidinol dehydrogenase of Vibrio cholerae serotype O1 (strain ATCC 39315 / El Tor Inaba N16961).